Reading from the N-terminus, the 303-residue chain is Phosphatidylglycerol--prolipoprotein diacylglyceryl transferase (303 aa).

3 helical membrane-spanning segments follow: residues 18–38 (LGTLTVRWYGILIAISVLIGL), 50–70 (INPGIINDLMPILILSSIFGA), and 106–126 (IWNGGIAIHGALIMGTISIIL). A 1,2-diacyl-sn-glycero-3-phospho-(1'-sn-glycerol) is bound at residue Arg154. A run of 3 helical transmembrane segments spans residues 193–213 (PTFLYESLWNICIFLILIFLF), 223–243 (LPSGALSCIYLITYSLGRIWI), and 266–286 (IAQLISFLLICLGSFGLWWIY).

Belongs to the Lgt family.

The protein resides in the cell inner membrane. It catalyses the reaction L-cysteinyl-[prolipoprotein] + a 1,2-diacyl-sn-glycero-3-phospho-(1'-sn-glycerol) = an S-1,2-diacyl-sn-glyceryl-L-cysteinyl-[prolipoprotein] + sn-glycerol 1-phosphate + H(+). Its pathway is protein modification; lipoprotein biosynthesis (diacylglyceryl transfer). Functionally, catalyzes the transfer of the diacylglyceryl group from phosphatidylglycerol to the sulfhydryl group of the N-terminal cysteine of a prolipoprotein, the first step in the formation of mature lipoproteins. This Prochlorococcus marinus (strain SARG / CCMP1375 / SS120) protein is Phosphatidylglycerol--prolipoprotein diacylglyceryl transferase.